Here is a 542-residue protein sequence, read N- to C-terminus: Putative inactive cadmium/zinc-transporting ATPase HMA3 (542 aa).

At 1–89 (MAEGEESKKM…VRPYGETSLK (89 aa)) the chain is on the cytoplasmic side. The region spanning 13–79 (QTSYFDVVGI…ALNQARLEAS (67 aa)) is the HMA domain. Residues 90-111 (SQWPSPFAIVSGVLLVLSFFKY) form a helical membrane-spanning segment. The Extracellular portion of the chain corresponds to 112–114 (FYS). The helical transmembrane segment at 115–134 (PLEWLAIVAVVAGVFPILAK) threads the bilayer. Residues 135-141 (AVASVTR) are Cytoplasmic-facing. A helical membrane pass occupies residues 142–162 (FRLDINALTLIAVIATLCMQD). Phe163 is a topological domain (extracellular). A helical transmembrane segment spans residues 164 to 184 (TEAATIVFLFSVADWLESSAA). Residues 185–310 (HKASIVMSSL…QTKTQRFIDK (126 aa)) are Cytoplasmic-facing. The chain crosses the membrane as a helical span at residues 311 to 333 (CSRYYTPAVVVSAACFAVIPVLL). The Extracellular portion of the chain corresponds to 334–341 (KVQDLSHW). Residues 342–359 (FHLALVVLVSGCPCGLIL) traverse the membrane as a helical segment. Residues 360 to 542 (STPVATFCAL…VAQALKELKS (183 aa)) are Cytoplasmic-facing.

This sequence belongs to the cation transport ATPase (P-type) (TC 3.A.3) family. Type IB subfamily.

Its subcellular location is the membrane. The protein is Putative inactive cadmium/zinc-transporting ATPase HMA3 (HMA3) of Arabidopsis thaliana (Mouse-ear cress).